Here is a 320-residue protein sequence, read N- to C-terminus: 4-hydroxy-3-methylbut-2-enyl diphosphate reductase (320 aa).

Cysteine 13 serves as a coordination point for [4Fe-4S] cluster. Positions 41 and 75 each coordinate (2E)-4-hydroxy-3-methylbut-2-enyl diphosphate. The dimethylallyl diphosphate site is built by histidine 41 and histidine 75. The isopentenyl diphosphate site is built by histidine 41 and histidine 75. A [4Fe-4S] cluster-binding site is contributed by cysteine 97. (2E)-4-hydroxy-3-methylbut-2-enyl diphosphate is bound at residue histidine 125. Histidine 125 is a binding site for dimethylallyl diphosphate. Residue histidine 125 coordinates isopentenyl diphosphate. Residue glutamate 127 is the Proton donor of the active site. Threonine 168 serves as a coordination point for (2E)-4-hydroxy-3-methylbut-2-enyl diphosphate. Cysteine 225 serves as a coordination point for [4Fe-4S] cluster. 4 residues coordinate (2E)-4-hydroxy-3-methylbut-2-enyl diphosphate: serine 253, serine 254, asparagine 255, and serine 302. Positions 253, 254, 255, and 302 each coordinate dimethylallyl diphosphate. Residues serine 253, serine 254, asparagine 255, and serine 302 each coordinate isopentenyl diphosphate.

It belongs to the IspH family. The cofactor is [4Fe-4S] cluster.

It catalyses the reaction isopentenyl diphosphate + 2 oxidized [2Fe-2S]-[ferredoxin] + H2O = (2E)-4-hydroxy-3-methylbut-2-enyl diphosphate + 2 reduced [2Fe-2S]-[ferredoxin] + 2 H(+). It carries out the reaction dimethylallyl diphosphate + 2 oxidized [2Fe-2S]-[ferredoxin] + H2O = (2E)-4-hydroxy-3-methylbut-2-enyl diphosphate + 2 reduced [2Fe-2S]-[ferredoxin] + 2 H(+). It functions in the pathway isoprenoid biosynthesis; dimethylallyl diphosphate biosynthesis; dimethylallyl diphosphate from (2E)-4-hydroxy-3-methylbutenyl diphosphate: step 1/1. The protein operates within isoprenoid biosynthesis; isopentenyl diphosphate biosynthesis via DXP pathway; isopentenyl diphosphate from 1-deoxy-D-xylulose 5-phosphate: step 6/6. In terms of biological role, catalyzes the conversion of 1-hydroxy-2-methyl-2-(E)-butenyl 4-diphosphate (HMBPP) into a mixture of isopentenyl diphosphate (IPP) and dimethylallyl diphosphate (DMAPP). Acts in the terminal step of the DOXP/MEP pathway for isoprenoid precursor biosynthesis. This is 4-hydroxy-3-methylbut-2-enyl diphosphate reductase from Chlorobium luteolum (strain DSM 273 / BCRC 81028 / 2530) (Pelodictyon luteolum).